Consider the following 201-residue polypeptide: 3-isopropylmalate dehydratase small subunit (201 aa).

The protein belongs to the LeuD family. LeuD type 1 subfamily. As to quaternary structure, heterodimer of LeuC and LeuD.

The enzyme catalyses (2R,3S)-3-isopropylmalate = (2S)-2-isopropylmalate. Its pathway is amino-acid biosynthesis; L-leucine biosynthesis; L-leucine from 3-methyl-2-oxobutanoate: step 2/4. In terms of biological role, catalyzes the isomerization between 2-isopropylmalate and 3-isopropylmalate, via the formation of 2-isopropylmaleate. The protein is 3-isopropylmalate dehydratase small subunit of Xanthobacter autotrophicus (strain ATCC BAA-1158 / Py2).